We begin with the raw amino-acid sequence, 674 residues long: Glutaminase kidney isoform, mitochondrial (674 aa).

A mitochondrion-targeting transit peptide spans methionine 1–leucine 54. The disordered stretch occupies residues proline 56–serine 123. The span at tryptophan 58–glycine 71 shows a compositional bias: gly residues. Positions proline 89–glycine 101 are enriched in low complexity. Residues lysine 135 and lysine 169 each carry the N6-succinyllysine modification. Serine 291 contacts substrate. Lysine 316 carries the post-translational modification N6-acetyllysine. The segment at glycine 320 to phenylalanine 327 is highly mobile activation loop. Asparagine 340, glutamate 386, asparagine 393, tyrosine 419, tyrosine 471, and valine 489 together coordinate substrate. 2 ANK repeats span residues aspartate 590 to phenylalanine 619 and tryptophan 624 to proline 653. The tract at residues threonine 652–leucine 674 is disordered. Residue serine 657 is modified to Phosphoserine. Residues aspartate 658–leucine 674 are compositionally biased toward basic and acidic residues.

This sequence belongs to the glutaminase family. As to quaternary structure, homotetramer, dimer of dimers. Tetramer composed of 68 and 65 kDa peptides in a 1:3 ratio. Can assemble into higher oligomers (in vitro), but the physiological significance of this is not clear. Interacts with RAF1 and MAP2K2. Interacts with ATCAY; the interaction is direct and may control GLS localization, negatively regulating its activity. In terms of processing, synthesized as a 74-kDa cytosolic precursor which is proteolytically processed by the mitochondrial-processing peptidase (MPP) via a 72-kDa intermediate to yield the mature mitochondrial 68- and 65-kDa subunits. As to expression, kidney, brain, and intestine.

It is found in the mitochondrion. It localises to the cytoplasm. The protein resides in the cytosol. Its subcellular location is the mitochondrion matrix. It catalyses the reaction L-glutamine + H2O = L-glutamate + NH4(+). Its activity is regulated as follows. Enzyme activity is increased by phosphate, due to increased kcat and increased substrate affinity. Its function is as follows. Catalyzes the first reaction in the primary pathway for the renal catabolism of glutamine. Plays a role in maintaining acid-base homeostasis. Regulates the levels of the neurotransmitter glutamate, the main excitatory neurotransmitter in the brain. The protein is Glutaminase kidney isoform, mitochondrial (Gls) of Rattus norvegicus (Rat).